The primary structure comprises 379 residues: Succinyl-diaminopimelate desuccinylase (379 aa).

H70 provides a ligand contact to Zn(2+). Residue D72 is part of the active site. D103 is a Zn(2+) binding site. E137 acts as the Proton acceptor in catalysis. Residues E138, E166, and H352 each coordinate Zn(2+).

The protein belongs to the peptidase M20A family. DapE subfamily. As to quaternary structure, homodimer. Zn(2+) serves as cofactor. The cofactor is Co(2+).

It catalyses the reaction N-succinyl-(2S,6S)-2,6-diaminopimelate + H2O = (2S,6S)-2,6-diaminopimelate + succinate. It participates in amino-acid biosynthesis; L-lysine biosynthesis via DAP pathway; LL-2,6-diaminopimelate from (S)-tetrahydrodipicolinate (succinylase route): step 3/3. Functionally, catalyzes the hydrolysis of N-succinyl-L,L-diaminopimelic acid (SDAP), forming succinate and LL-2,6-diaminopimelate (DAP), an intermediate involved in the bacterial biosynthesis of lysine and meso-diaminopimelic acid, an essential component of bacterial cell walls. The chain is Succinyl-diaminopimelate desuccinylase from Shewanella baltica (strain OS155 / ATCC BAA-1091).